The following is a 215-amino-acid chain: High frequency lysogenization protein HflD homolog (215 aa).

Belongs to the HflD family.

It is found in the cytoplasm. It localises to the cell inner membrane. This Haemophilus ducreyi (strain 35000HP / ATCC 700724) protein is High frequency lysogenization protein HflD homolog.